A 492-amino-acid polypeptide reads, in one-letter code: FAD-containing monooxygenase EthA (492 aa).

Residues S15, E36, 44 to 47 (TWDL), D56, and V104 each bind FAD. 54-56 (RSD) is an NADP(+) binding site. Residues 183–189 (SGATAVT) and 207–208 (RS) each bind NADP(+).

The protein belongs to the FAD-binding monooxygenase family. It depends on FAD as a cofactor.

It is found in the cell membrane. The enzyme catalyses ethionamide + NADPH + O2 + H(+) = ethionamide S-oxide + NADP(+) + H2O. In terms of biological role, monooxygenase able to convert a wide range of ketones to the corresponding esters or lactones via a Baeyer-Villiger oxidation reaction. Can act on long-chain aliphatic ketones (2-hexanone to 2-dodecanone) and on aromatic ketones (phenylacetone and benzylacetone). Is also able to catalyze enantioselective sulfoxidation of methyl-p-tolylsulfide. In vivo, likely functions as a BVMO, but the exact nature of the physiological substrate(s) remains to be established. Is responsible for the activation of several thiocarbamide-containing pro-drugs, such as ethionamide (ETH), isoxyl (ISO) and thiacetazone (TAC), into reactive species. The polypeptide is FAD-containing monooxygenase EthA (ethA) (Mycolicibacterium smegmatis (strain ATCC 700084 / mc(2)155) (Mycobacterium smegmatis)).